The sequence spans 37 residues: Large ribosomal subunit protein bL36 (37 aa).

The protein belongs to the bacterial ribosomal protein bL36 family.

This Histophilus somni (strain 129Pt) (Haemophilus somnus) protein is Large ribosomal subunit protein bL36.